Reading from the N-terminus, the 489-residue chain is Adenylosuccinate synthetase 2, chloroplastic (489 aa).

A chloroplast-targeting transit peptide spans 1–45 (MPFSPPCLDPAAAAAASLSFLPAAAARPPAPCAVAPRSRRALRVA). Residues 76-82 (GDEGKGK) and 104-106 (GHT) contribute to the GTP site. D77 (proton acceptor) is an active-site residue. Positions 77 and 104 each coordinate Mg(2+). Residues 77–80 (DEGK), 102–105 (NAGH), T194, R208, Q288, T303, and R367 contribute to the IMP site. H105 (proton donor) is an active-site residue. 363-369 (TTTGRPR) contributes to the substrate binding site. GTP is bound by residues R369, 395 to 397 (KLD), and 478 to 480 (GVG).

Belongs to the adenylosuccinate synthetase family. Homodimer. Requires Mg(2+) as cofactor.

It localises to the plastid. It is found in the chloroplast. It catalyses the reaction IMP + L-aspartate + GTP = N(6)-(1,2-dicarboxyethyl)-AMP + GDP + phosphate + 2 H(+). The protein operates within purine metabolism; AMP biosynthesis via de novo pathway; AMP from IMP: step 1/2. Functionally, plays an important role in the de novo pathway and in the salvage pathway of purine nucleotide biosynthesis. Catalyzes the first committed step in the biosynthesis of AMP from IMP. The chain is Adenylosuccinate synthetase 2, chloroplastic from Oryza sativa subsp. japonica (Rice).